A 453-amino-acid polypeptide reads, in one-letter code: Probable glycine dehydrogenase (decarboxylating) subunit 1 (453 aa).

Belongs to the GcvP family. N-terminal subunit subfamily. As to quaternary structure, the glycine cleavage system is composed of four proteins: P, T, L and H. In this organism, the P 'protein' is a heterodimer of two subunits.

The catalysed reaction is N(6)-[(R)-lipoyl]-L-lysyl-[glycine-cleavage complex H protein] + glycine + H(+) = N(6)-[(R)-S(8)-aminomethyldihydrolipoyl]-L-lysyl-[glycine-cleavage complex H protein] + CO2. Functionally, the glycine cleavage system catalyzes the degradation of glycine. The P protein binds the alpha-amino group of glycine through its pyridoxal phosphate cofactor; CO(2) is released and the remaining methylamine moiety is then transferred to the lipoamide cofactor of the H protein. This Methylococcus capsulatus (strain ATCC 33009 / NCIMB 11132 / Bath) protein is Probable glycine dehydrogenase (decarboxylating) subunit 1.